The primary structure comprises 821 residues: Kinetochore protein SLK19 (821 aa).

2 disordered regions span residues 1–52 (MNEV…SQFV) and 99–153 (FDDK…NDKE). At T7 the chain carries Phosphothreonine; by CDC28. Over residues 15–51 (QAQQREQNSENCSQERNPRTFNSEPDSSFNSPGSSQF) the composition is skewed to polar residues. Composition is skewed to basic and acidic residues over residues 99-122 (FDDK…DKHV) and 136-153 (SSEK…NDKE). A phosphoserine mark is found at S188 and S189. Phosphoserine; by CDC28 is present on S201. The residue at position 216 (S216) is a Phosphoserine. At T273 the chain carries Phosphothreonine. Disordered stretches follow at residues 274 to 298 (PLYE…DDNQ) and 699 to 720 (EQNN…RDDE). S283 is subject to Phosphoserine. Residues 310–821 (AKRNEELTDQ…LLKLLENEKK (512 aa)) adopt a coiled-coil conformation.

Post-translationally, cleaved by ESP1 at the onset of anaphase. In terms of processing, phosphorylated by CDC5/Polo-like kinase at the onset of anaphase. Phosphorylation takes places at proximity to cleavage sites and is required for an efficient cleavage by ESP1. Phosphorylated also by CDC28.

The protein resides in the chromosome. The protein localises to the centromere. Its subcellular location is the kinetochore. It is found in the cytoplasm. It localises to the cytoskeleton. The protein resides in the microtubule organizing center. The protein localises to the spindle pole body. Functionally, has a role in spindle assembly and stability. Required to ensure a timely exit form mitosis. Essential to maintain pre-anaphase spindle polarity. Associates to the plus ends of the microtubules at the kinetochore and spindle midzone. A component of the FEAR (CDC14 Early Anaphase Release) network which promotes CDC14 release from the nucleolus during early anaphase. Required for proper chromosome segregation during meiosis I where it prevents premature sister chromatid separation. This is Kinetochore protein SLK19 (SLK19) from Saccharomyces cerevisiae (strain ATCC 204508 / S288c) (Baker's yeast).